A 193-amino-acid polypeptide reads, in one-letter code: Xanthine phosphoribosyltransferase (193 aa).

The xanthine site is built by leucine 20 and threonine 27. Residue 128-132 (ANGQA) participates in 5-phospho-alpha-D-ribose 1-diphosphate binding. Lysine 156 contributes to the xanthine binding site.

Belongs to the purine/pyrimidine phosphoribosyltransferase family. Xpt subfamily. In terms of assembly, homodimer.

Its subcellular location is the cytoplasm. The catalysed reaction is XMP + diphosphate = xanthine + 5-phospho-alpha-D-ribose 1-diphosphate. Its pathway is purine metabolism; XMP biosynthesis via salvage pathway; XMP from xanthine: step 1/1. Its function is as follows. Converts the preformed base xanthine, a product of nucleic acid breakdown, to xanthosine 5'-monophosphate (XMP), so it can be reused for RNA or DNA synthesis. The protein is Xanthine phosphoribosyltransferase of Streptococcus equi subsp. equi (strain 4047).